The sequence spans 387 residues: Succinate--CoA ligase [ADP-forming] subunit beta (387 aa).

The region spanning 9-236 (KELFAKHNVP…RAATDPLELK (228 aa)) is the ATP-grasp domain. ATP is bound by residues K45, 52–54 (GRG), S94, and E99. Residues N191 and D205 each contribute to the Mg(2+) site. Residues N256 and 318–320 (GIT) contribute to the substrate site.

The protein belongs to the succinate/malate CoA ligase beta subunit family. Heterotetramer of two alpha and two beta subunits. It depends on Mg(2+) as a cofactor.

It catalyses the reaction succinate + ATP + CoA = succinyl-CoA + ADP + phosphate. The catalysed reaction is GTP + succinate + CoA = succinyl-CoA + GDP + phosphate. The protein operates within carbohydrate metabolism; tricarboxylic acid cycle; succinate from succinyl-CoA (ligase route): step 1/1. Functionally, succinyl-CoA synthetase functions in the citric acid cycle (TCA), coupling the hydrolysis of succinyl-CoA to the synthesis of either ATP or GTP and thus represents the only step of substrate-level phosphorylation in the TCA. The beta subunit provides nucleotide specificity of the enzyme and binds the substrate succinate, while the binding sites for coenzyme A and phosphate are found in the alpha subunit. In Mycobacterium tuberculosis (strain CDC 1551 / Oshkosh), this protein is Succinate--CoA ligase [ADP-forming] subunit beta.